A 132-amino-acid chain; its full sequence is Small ribosomal subunit protein uS8 (132 aa).

This sequence belongs to the universal ribosomal protein uS8 family. In terms of assembly, part of the 30S ribosomal subunit. Contacts proteins S5 and S12.

Its function is as follows. One of the primary rRNA binding proteins, it binds directly to 16S rRNA central domain where it helps coordinate assembly of the platform of the 30S subunit. This is Small ribosomal subunit protein uS8 from Brucella ovis (strain ATCC 25840 / 63/290 / NCTC 10512).